The sequence spans 773 residues: Protein YhgF (773 aa).

The 70-residue stretch at 651–720 folds into the S1 motif domain; it reads GMILEGAVTN…QRKRIALTMR (70 aa). The disordered stretch occupies residues 721–773; it reads LDEQPGETNARRGGGNERPQNNRPAAKPRGREAQPAGNSAMMDALAAAMGKKR.

The chain is Protein YhgF (yhgF) from Escherichia coli (strain K12).